Consider the following 314-residue polypeptide: Putative peptide transport system permease protein BruAb2_1031 (314 aa).

Transmembrane regions (helical) follow at residues 12-32 (AIPVMLIVAILTFLLMKLLPG), 101-121 (LALLAFAITIPVGIIMGVVAA), 135-155 (LALLGVSVPSFWLAILAVILF), 177-197 (WLRSLILPASILALFQIGYLA), 237-257 (VSVLTVSGYIFSLLIGGSVVI), and 286-306 (MLFLGFLFVAINVLVDILYTI). Residues 95–304 (LPVTISLALL…AINVLVDILY (210 aa)) enclose the ABC transmembrane type-1 domain.

It belongs to the binding-protein-dependent transport system permease family. As to quaternary structure, the complex is composed of two ATP-binding proteins (BruAb2_1033 and BruAb2_1034), two transmembrane proteins (BruAb2_1031 and BruAb2_1032) and a solute-binding protein (BruAb2_1030).

The protein resides in the cell inner membrane. Functionally, probably part of an ABC transporter complex that could be involved in peptide import. Probably responsible for the translocation of the substrate across the membrane. The sequence is that of Putative peptide transport system permease protein BruAb2_1031 from Brucella abortus biovar 1 (strain 9-941).